Consider the following 505-residue polypeptide: Sucrose porin (505 aa).

An N-terminal signal peptide occupies residues 1-22 (MYKKRKLAILIALLTGTAAAHG). The interval 44 to 94 (ETRASTAESRAASAEQKVQQLTQQQQQTQATTQQVARRTTQLEEKAERPGG) is disordered. The segment covering 46–82 (RASTAESRAASAEQKVQQLTQQQQQTQATTQQVARRT) has biased composition (low complexity). Residues 83-93 (TQLEEKAERPG) show a composition bias toward basic and acidic residues.

It belongs to the porin LamB (TC 1.B.3) family. In terms of assembly, homotrimer.

It localises to the cell outer membrane. Functionally, porin for sucrose uptake. The protein is Sucrose porin (scrY) of Klebsiella pneumoniae.